The sequence spans 229 residues: 2-C-methyl-D-erythritol 4-phosphate cytidylyltransferase (229 aa).

It belongs to the IspD/TarI cytidylyltransferase family. IspD subfamily.

The enzyme catalyses 2-C-methyl-D-erythritol 4-phosphate + CTP + H(+) = 4-CDP-2-C-methyl-D-erythritol + diphosphate. It functions in the pathway isoprenoid biosynthesis; isopentenyl diphosphate biosynthesis via DXP pathway; isopentenyl diphosphate from 1-deoxy-D-xylulose 5-phosphate: step 2/6. Catalyzes the formation of 4-diphosphocytidyl-2-C-methyl-D-erythritol from CTP and 2-C-methyl-D-erythritol 4-phosphate (MEP). This is 2-C-methyl-D-erythritol 4-phosphate cytidylyltransferase from Clostridium botulinum (strain Okra / Type B1).